A 318-amino-acid chain; its full sequence is MVDNNKTVDNNYKHTSVLLDEAVKGLNIRDNGIYIDGTFGRGGHSRLILSQLGPEGRLIAIDRDPEAIEAAKQITDPRFSIVHGPFSDLAHYVRDLDLVGRIDGILLDLGVSSPQLDDAERGFSFMRDGPLDMRMDPSRGLSAAEWLMKASADDIAWVLKTFGEERFAKRLAKAIVERNLTQPMTRTKELADLIANASPFRDKHPATRSFQAIRIYINSELEEIERALDGAHEVLAPEGRLSVISFHSLEDRIVKNFIRHHSRGPQVPAGLPLTEAQLRSMGGRTLKSVGKMMPGDAEIAENPRARSSVLRFAERIGE.

Residues 42 to 44 (GGH), Asp-62, Phe-86, Asp-108, and Gln-115 contribute to the S-adenosyl-L-methionine site.

This sequence belongs to the methyltransferase superfamily. RsmH family.

It localises to the cytoplasm. It catalyses the reaction cytidine(1402) in 16S rRNA + S-adenosyl-L-methionine = N(4)-methylcytidine(1402) in 16S rRNA + S-adenosyl-L-homocysteine + H(+). Its function is as follows. Specifically methylates the N4 position of cytidine in position 1402 (C1402) of 16S rRNA. This Yersinia pestis (strain Pestoides F) protein is Ribosomal RNA small subunit methyltransferase H.